The primary structure comprises 145 residues: Basic phospholipase A2 P'513 (145 aa).

Residues 1 to 21 form the signal peptide; that stretch reads MYPAHLLLLLAVCVSLLGASA. Residues 22-27 constitute a propeptide that is removed on maturation; that stretch reads IPPLPL. Disulfide bonds link Cys38–Cys98, Cys54–Cys144, Cys56–Cys72, Cys71–Cys125, Cys78–Cys118, Cys87–Cys111, and Cys105–Cys116. Ca(2+) contacts are provided by Tyr55, Gly57, and Gly59. The active site involves His75. Asp76 contributes to the Ca(2+) binding site. Residue Asp119 is part of the active site.

The protein belongs to the phospholipase A2 family. Group I subfamily. D49 sub-subfamily. It depends on Ca(2+) as a cofactor. In terms of tissue distribution, expressed by the venom gland.

It localises to the secreted. The enzyme catalyses a 1,2-diacyl-sn-glycero-3-phosphocholine + H2O = a 1-acyl-sn-glycero-3-phosphocholine + a fatty acid + H(+). Its function is as follows. PLA2 catalyzes the calcium-dependent hydrolysis of the 2-acyl groups in 3-sn-phosphoglycerides. In Laticauda laticaudata (Blue-ringed sea krait), this protein is Basic phospholipase A2 P'513.